The chain runs to 256 residues: Protein US2 homolog (256 aa).

Disordered stretches follow at residues 100-120, 167-186, and 236-256; these read TRRPPADGSKPGEPLRISPPP, STAAGAPGAPTGARLTRRRP, and VRRRRGGRGNGRERAPRCTIS. Over residues 167–180 the composition is skewed to low complexity; sequence STAAGAPGAPTGAR. Over residues 245-256 the composition is skewed to basic and acidic residues; it reads NGRERAPRCTIS.

The protein belongs to the herpesviridae US2 family.

The sequence is that of Protein US2 homolog (28K) from Sus scrofa (Pig).